Consider the following 393-residue polypeptide: S-adenosylmethionine synthase (393 aa).

Glu9 contacts Mg(2+). His15 is an ATP binding site. A K(+)-binding site is contributed by Glu43. Positions 56 and 99 each coordinate L-methionine. Residues 167–169 (DGK), 235–238 (SGRF), Asp246, 252–253 (RK), Ala269, Lys273, and Lys277 each bind ATP. Asp246 serves as a coordination point for L-methionine. An L-methionine-binding site is contributed by Lys277.

The protein belongs to the AdoMet synthase family. Homotetramer. The cofactor is Mn(2+). Requires Mg(2+) as cofactor. It depends on Co(2+) as a cofactor. K(+) is required as a cofactor.

The protein resides in the cytoplasm. The enzyme catalyses L-methionine + ATP + H2O = S-adenosyl-L-methionine + phosphate + diphosphate. The protein operates within amino-acid biosynthesis; S-adenosyl-L-methionine biosynthesis; S-adenosyl-L-methionine from L-methionine: step 1/1. Catalyzes the formation of S-adenosylmethionine from methionine and ATP. The reaction comprises two steps that are both catalyzed by the same enzyme: formation of S-adenosylmethionine (AdoMet) and triphosphate, and subsequent hydrolysis of the triphosphate. The chain is S-adenosylmethionine synthase (SAMS) from Gossypium hirsutum (Upland cotton).